A 395-amino-acid polypeptide reads, in one-letter code: NAD(P)H-quinone oxidoreductase subunit H, chloroplastic (395 aa).

It belongs to the complex I 49 kDa subunit family. As to quaternary structure, NDH is composed of at least 16 different subunits, 5 of which are encoded in the nucleus.

The protein localises to the plastid. Its subcellular location is the chloroplast thylakoid membrane. It carries out the reaction a plastoquinone + NADH + (n+1) H(+)(in) = a plastoquinol + NAD(+) + n H(+)(out). The catalysed reaction is a plastoquinone + NADPH + (n+1) H(+)(in) = a plastoquinol + NADP(+) + n H(+)(out). NDH shuttles electrons from NAD(P)H:plastoquinone, via FMN and iron-sulfur (Fe-S) centers, to quinones in the photosynthetic chain and possibly in a chloroplast respiratory chain. The immediate electron acceptor for the enzyme in this species is believed to be plastoquinone. Couples the redox reaction to proton translocation, and thus conserves the redox energy in a proton gradient. The protein is NAD(P)H-quinone oxidoreductase subunit H, chloroplastic of Chloranthus spicatus (Chulantree).